The primary structure comprises 91 residues: Small ribosomal subunit protein uS19 (91 aa).

Belongs to the universal ribosomal protein uS19 family.

In terms of biological role, protein S19 forms a complex with S13 that binds strongly to the 16S ribosomal RNA. This chain is Small ribosomal subunit protein uS19, found in Parasynechococcus marenigrum (strain WH8102).